The chain runs to 523 residues: Maintenance of mitochondrial morphology protein 1 (523 aa).

At 1-43 the chain is on the lumenal side; that stretch reads MAGSTSASLQTPYFPSSTQINPVRVDHTLPLPPAQPSLSFTQG. Residues 44-64 form a helical membrane-spanning segment; that stretch reads LLVGQLSVVLLIGAFIKFFIF. Residues 65-523 are Cytoplasmic-facing; it reads GEAPPPPSRG…GSMPDTVTET (459 aa). Disordered stretches follow at residues 70–118, 295–349, 420–473, and 492–523; these read PPSR…SSST, TSDQ…SKHG, RTGL…IDRG, and GGHQNQSGRDGGRGGNEQFAMPGSMPDTVTET. Polar residues-rich tracts occupy residues 74–96, 105–118, and 295–312; these read GLSNRTSTHPRSYSINAASTDSS, STSNILRPVPSSST, and TSDQTMSPIPTPHDTTSE. The SMP-LTD domain maps to 151-412; the sequence is QPESLDWFNV…EPRVQVVGLP (262 aa). Residues 449-467 show a composition bias toward gly residues; it reads GVSGGGGSGGGSGGGGGSM.

It belongs to the MMM1 family. Homodimer. Component of the ER-mitochondria encounter structure (ERMES) or MDM complex, composed of MMM1, MDM10, MDM12 and MDM34. An MMM1 homodimer associates with one molecule of MDM12 on each side in a pairwise head-to-tail manner, and the SMP-LTD domains of MMM1 and MDM12 generate a continuous hydrophobic tunnel for phospholipid trafficking.

It is found in the endoplasmic reticulum membrane. In terms of biological role, component of the ERMES/MDM complex, which serves as a molecular tether to connect the endoplasmic reticulum (ER) and mitochondria. Components of this complex are involved in the control of mitochondrial shape and protein biogenesis, and function in nonvesicular lipid trafficking between the ER and mitochondria. The MDM12-MMM1 subcomplex functions in the major beta-barrel assembly pathway that is responsible for biogenesis of all outer membrane beta-barrel proteins, and acts in a late step after the SAM complex. The MDM10-MDM12-MMM1 subcomplex further acts in the TOM40-specific pathway after the action of the MDM12-MMM1 complex. Essential for establishing and maintaining the structure of mitochondria and maintenance of mtDNA nucleoids. The protein is Maintenance of mitochondrial morphology protein 1 of Paracoccidioides brasiliensis (strain Pb03).